We begin with the raw amino-acid sequence, 548 residues long: MDHFNLAGPESNTSITSLEWLGIKNSFTGSHWAHITGLSELHPTGFLCLIATLIIGIVHLTRGPKPTVLPVVNPPGTFELTANRVKKEWLVDARQIIRRGFEKFPGKPFNMIAADVGLTTVLPPEYASEIRNNPSLSFVAFMAHLFFSELPGFEPTREGMFDNDIGITVVHKYLTVNLARITEPLSREATAALKDIFTDNSEWHDANLKAINLALVARLSSRIFLGEELCRNEEWLKITVNYTVDVMKAAERLRRVPGPLRRIVHWFLPEAQKCRDEVKRAGKVIRPVLEKRRREKATMESEGKEALQYNDAIEWFEQMAKSQGTSYDPEVVQLFLSTVAIHTTSDLLTVVMADLARNPEIIEPLREEISSVLRDGGWKKTSLTDMKLLDSVLKESLRLKPIAVVSMRRVAMDHLKLSDGTFLPKGTKMAVSSHRMWDPDVYENPEQWDGFRYVNLRETPGQDKHAQFVSTSERHLGFGHGKHACPGRFFASSELKVALCHILMKYDFELAPGTVVQHRYSGASYYADPAIRVMLRRRNVALPSWFER.

A heme-binding site is contributed by Cys485.

The protein belongs to the cytochrome P450 family. Heme is required as a cofactor.

The protein operates within secondary metabolite biosynthesis. In terms of biological role, cytochrome P450 monooxygenase; part of the gene cluster that mediates the biosynthesis of heptelidic acid (HA), a sesquiterpene lactone that acts as an inhibitor of glyceraldehyde-3-phosphatedehydrogenase (GAPDH) and a growth inhibitor of the salt-tolerant lactic acid bacteria in soy sauce brewing. The sequence is that of Cytochrome P450 monooxygenase hepE from Aspergillus oryzae (strain ATCC 42149 / RIB 40) (Yellow koji mold).